Reading from the N-terminus, the 390-residue chain is Glucose-fructose oxidoreductase domain-containing protein 1 (390 aa).

The N-terminal stretch at 1–21 is a signal peptide; it reads MLPGVGVFGTSLTSRVIIPLL. Asparagine 161, asparagine 270, and asparagine 354 each carry an N-linked (GlcNAc...) asparagine glycan.

This sequence belongs to the Gfo/Idh/MocA family. As to quaternary structure, homodimer.

The protein resides in the secreted. Probably catalytically inactive enzyme. Does not bind NAD or NADP. The sequence is that of Glucose-fructose oxidoreductase domain-containing protein 1 (gfod1) from Xenopus tropicalis (Western clawed frog).